A 580-amino-acid polypeptide reads, in one-letter code: Glutamyl-tRNA(Gln) amidotransferase subunit B-2, chloroplastic/mitochondrial (580 aa).

Composition is skewed to low complexity over residues 20-35 and 42-59; these read RRDA…ATVS and AVST…SAAV. The segment at 20-64 is disordered; the sequence is RRDATAAASTSAATVSRGRRARAVSTTTTTSSSSSSSAAVDARDA.

Belongs to the GatB/GatE family. GatB subfamily. Subunit of the heterotrimeric GatCAB amidotransferase (AdT) complex, composed of A, B and C subunits.

It is found in the mitochondrion. Its subcellular location is the plastid. The protein resides in the chloroplast. It catalyses the reaction L-glutamyl-tRNA(Gln) + L-glutamine + ATP + H2O = L-glutaminyl-tRNA(Gln) + L-glutamate + ADP + phosphate + H(+). In terms of biological role, allows the formation of correctly charged Gln-tRNA(Gln) through the transamidation of misacylated Glu-tRNA(Gln) in chloroplasts and mitochondria. The reaction takes place in the presence of glutamine and ATP through an activated gamma-phospho-Glu-tRNA(Gln). The protein is Glutamyl-tRNA(Gln) amidotransferase subunit B-2, chloroplastic/mitochondrial of Micromonas pusilla (strain CCMP1545) (Picoplanktonic green alga).